Here is a 92-residue protein sequence, read N- to C-terminus: Small ribosomal subunit protein uS19 (92 aa).

Belongs to the universal ribosomal protein uS19 family.

In terms of biological role, protein S19 forms a complex with S13 that binds strongly to the 16S ribosomal RNA. This Buchnera aphidicola subsp. Baizongia pistaciae (strain Bp) protein is Small ribosomal subunit protein uS19.